A 101-amino-acid chain; its full sequence is Gastrin (101 aa).

The first 21 residues, 1 to 21 (MPRLCVYMLVLVLALATFSEA), serve as a signal peptide directing secretion. The segment at 23-101 (WKPRSQLQDA…FGRRSAEEDQ (79 aa)) is disordered. The span at 25-37 (PRSQLQDASSGPG) shows a compositional bias: polar residues. Position 87 is a sulfotyrosine (Tyr-87). At Phe-92 the chain carries Phenylalanine amide. The segment covering 92 to 101 (FGRRSAEEDQ) has biased composition (basic and acidic residues). Ser-96 is modified (phosphoserine). Residues 96–101 (SAEEDQ) constitute a propeptide that is removed on maturation.

It belongs to the gastrin/cholecystokinin family. In terms of processing, sulfation enhances proteolytic processing, and blocks peptide degradation. Levels of sulfation differ between proteolytically-cleaved gastrins and between tissues. Abundantly expressed in the stomach and duodenum. Low levels in brain, ovary and pancreas.

Its subcellular location is the secreted. In terms of biological role, gastrin stimulates the stomach mucosa to produce and secrete hydrochloric acid and the pancreas to secrete its digestive enzymes. It also stimulates smooth muscle contraction and increases blood circulation and water secretion in the stomach and intestine. The chain is Gastrin (Gast) from Mus musculus (Mouse).